Reading from the N-terminus, the 138-residue chain is ATP synthase epsilon chain (138 aa).

Belongs to the ATPase epsilon chain family. As to quaternary structure, F-type ATPases have 2 components, CF(1) - the catalytic core - and CF(0) - the membrane proton channel. CF(1) has five subunits: alpha(3), beta(3), gamma(1), delta(1), epsilon(1). CF(0) has three main subunits: a, b and c.

Its subcellular location is the cell membrane. Produces ATP from ADP in the presence of a proton gradient across the membrane. The sequence is that of ATP synthase epsilon chain from Streptococcus equi subsp. equi (strain 4047).